A 218-amino-acid chain; its full sequence is Large ribosomal subunit protein uL3 (218 aa).

Positions glycine 127–glycine 167 are disordered.

Belongs to the universal ribosomal protein uL3 family. Part of the 50S ribosomal subunit. Forms a cluster with proteins L14 and L19.

One of the primary rRNA binding proteins, it binds directly near the 3'-end of the 23S rRNA, where it nucleates assembly of the 50S subunit. This chain is Large ribosomal subunit protein uL3, found in Prochlorococcus marinus (strain NATL1A).